Here is a 253-residue protein sequence, read N- to C-terminus: Imidazole glycerol phosphate synthase subunit HisF (253 aa).

Catalysis depends on residues Asp11 and Asp130.

Belongs to the HisA/HisF family. As to quaternary structure, heterodimer of HisH and HisF.

The protein resides in the cytoplasm. The enzyme catalyses 5-[(5-phospho-1-deoxy-D-ribulos-1-ylimino)methylamino]-1-(5-phospho-beta-D-ribosyl)imidazole-4-carboxamide + L-glutamine = D-erythro-1-(imidazol-4-yl)glycerol 3-phosphate + 5-amino-1-(5-phospho-beta-D-ribosyl)imidazole-4-carboxamide + L-glutamate + H(+). The protein operates within amino-acid biosynthesis; L-histidine biosynthesis; L-histidine from 5-phospho-alpha-D-ribose 1-diphosphate: step 5/9. Its function is as follows. IGPS catalyzes the conversion of PRFAR and glutamine to IGP, AICAR and glutamate. The HisF subunit catalyzes the cyclization activity that produces IGP and AICAR from PRFAR using the ammonia provided by the HisH subunit. In Cereibacter sphaeroides (strain ATCC 17025 / ATH 2.4.3) (Rhodobacter sphaeroides), this protein is Imidazole glycerol phosphate synthase subunit HisF.